Here is a 774-residue protein sequence, read N- to C-terminus: 5-methyltetrahydropteroyltriglutamate--homocysteine methyltransferase (774 aa).

Residues 23 to 26 (RELK) and Lys123 contribute to the 5-methyltetrahydropteroyltri-L-glutamate site. Residues 446–448 (IGS) and Glu499 contribute to the L-homocysteine site. L-methionine-binding positions include 446–448 (IGS) and Glu499. 5-methyltetrahydropteroyltri-L-glutamate contacts are provided by residues 530-531 (RC) and Trp576. Residue Asp614 participates in L-homocysteine binding. Asp614 contacts L-methionine. 5-methyltetrahydropteroyltri-L-glutamate is bound at residue Glu620. Positions 656, 658, and 680 each coordinate Zn(2+). The Proton donor role is filled by His709. A Zn(2+)-binding site is contributed by Cys741.

Belongs to the vitamin-B12 independent methionine synthase family. Zn(2+) serves as cofactor.

It catalyses the reaction 5-methyltetrahydropteroyltri-L-glutamate + L-homocysteine = tetrahydropteroyltri-L-glutamate + L-methionine. Its pathway is amino-acid biosynthesis; L-methionine biosynthesis via de novo pathway; L-methionine from L-homocysteine (MetE route): step 1/1. In terms of biological role, catalyzes the transfer of a methyl group from 5-methyltetrahydrofolate to homocysteine resulting in methionine formation. The polypeptide is 5-methyltetrahydropteroyltriglutamate--homocysteine methyltransferase (Aliivibrio fischeri (strain ATCC 700601 / ES114) (Vibrio fischeri)).